A 554-amino-acid polypeptide reads, in one-letter code: Condensin-2 complex subunit H2 (554 aa).

Phosphoserine occurs at positions 45, 178, 182, 199, and 200. Residues 154 to 296 (PVDVHPMPRS…GQKRKRKGAT (143 aa)) form a disordered region. The span at 179–191 (RNGSPVSVRSISQ) shows a compositional bias: polar residues. Residues 201–210 (GDEDAEDVAE) show a composition bias toward acidic residues. Residue S441 is modified to Phosphoserine.

This sequence belongs to the CND2 H2 (condensin-2 subunit 2) family. As to quaternary structure, component of the condensin-2 complex, which contains the SMC2 and SMC4 heterodimer, and three non SMC subunits, NCAPG2, NCAPH2 and NCAPD3 that probably regulate the complex.

It localises to the nucleus. Functionally, regulatory subunit of the condensin-2 complex, a complex that seems to provide chromosomes with an additional level of organization and rigidity and in establishing mitotic chromosome architecture. May promote the resolution of double-strand DNA catenanes (intertwines) between sister chromatids. Condensin-mediated compaction likely increases tension in catenated sister chromatids, providing directionality for type II topoisomerase-mediated strand exchanges toward chromatid decatenation. Required for decatenation of chromatin bridges at anaphase. Early in neurogenesis, may play an essential role to ensure accurate mitotic chromosome condensation in neuron stem cells, ultimately affecting neuron pool and cortex size. Seems to have lineage-specific role in T-cell development. The chain is Condensin-2 complex subunit H2 (Ncaph2) from Rattus norvegicus (Rat).